We begin with the raw amino-acid sequence, 171 residues long: Shikimate kinase (171 aa).

An ATP-binding site is contributed by 11–16 (GTGKTT). Threonine 15 lines the Mg(2+) pocket. Positions 33, 57, and 79 each coordinate substrate. Arginine 117 provides a ligand contact to ATP. Arginine 136 contacts substrate.

This sequence belongs to the shikimate kinase family. In terms of assembly, monomer. Requires Mg(2+) as cofactor.

The protein resides in the cytoplasm. The catalysed reaction is shikimate + ATP = 3-phosphoshikimate + ADP + H(+). The protein operates within metabolic intermediate biosynthesis; chorismate biosynthesis; chorismate from D-erythrose 4-phosphate and phosphoenolpyruvate: step 5/7. Its function is as follows. Catalyzes the specific phosphorylation of the 3-hydroxyl group of shikimic acid using ATP as a cosubstrate. The protein is Shikimate kinase of Caldanaerobacter subterraneus subsp. tengcongensis (strain DSM 15242 / JCM 11007 / NBRC 100824 / MB4) (Thermoanaerobacter tengcongensis).